Here is a 316-residue protein sequence, read N- to C-terminus: MNVQIGIDLMGGDHSPLVIWEVLIDVLNSTASNSHFSFTAFASHEVQEQILSSCTYKECPKIIASDSFVTMDDSPLSAIRKKSSSMALGLDYLKEDKIDAFISTGNTAALITLSRTKIPVFPTVRRPALLVRVPTMRGCAVILDVGANVSVNPEEMLGFARMGLAYRQCIGEKEHPTIGLLNIGSEERKGTEAHRQTFRILRETFQDSFLGNIESGDVFSGSVDIVVADGFTGNIFLKTAEGVFDFLRHILGDKLESDVKRQLDYTIYPGSMVCGLSKLVIKCHGKACGRSLFNGISGSIDLARARVCQRILSSLS.

It belongs to the PlsX family. As to quaternary structure, homodimer. Probably interacts with PlsY.

Its subcellular location is the cytoplasm. It carries out the reaction a fatty acyl-[ACP] + phosphate = an acyl phosphate + holo-[ACP]. It functions in the pathway lipid metabolism; phospholipid metabolism. Functionally, catalyzes the reversible formation of acyl-phosphate (acyl-PO(4)) from acyl-[acyl-carrier-protein] (acyl-ACP). This enzyme utilizes acyl-ACP as fatty acyl donor, but not acyl-CoA. This is Phosphate acyltransferase from Chlamydia felis (strain Fe/C-56) (Chlamydophila felis).